We begin with the raw amino-acid sequence, 314 residues long: 2,3-dihydroxyphenylpropionate/2,3-dihydroxicinnamic acid 1,2-dioxygenase (314 aa).

H115 (proton donor) is an active-site residue. The Proton acceptor role is filled by H179.

This sequence belongs to the LigB/MhpB extradiol dioxygenase family. Homotetramer. It depends on Fe(2+) as a cofactor.

It catalyses the reaction 3-(2,3-dihydroxyphenyl)propanoate + O2 = (2Z,4E)-2-hydroxy-6-oxonona-2,4-dienedioate + H(+). The catalysed reaction is (2E)-3-(2,3-dihydroxyphenyl)prop-2-enoate + O2 = (2Z,4E,7E)-2-hydroxy-6-oxonona-2,4,7-trienedioate + H(+). Its pathway is aromatic compound metabolism; 3-phenylpropanoate degradation. Functionally, catalyzes the non-heme iron(II)-dependent oxidative cleavage of 2,3-dihydroxyphenylpropionic acid and 2,3-dihydroxicinnamic acid into 2-hydroxy-6-ketononadienedioate and 2-hydroxy-6-ketononatrienedioate, respectively. In Rhodococcus jostii (strain RHA1), this protein is 2,3-dihydroxyphenylpropionate/2,3-dihydroxicinnamic acid 1,2-dioxygenase.